Here is a 708-residue protein sequence, read N- to C-terminus: Exocyst complex component 5 (708 aa).

Alanine 2 bears the N-acetylalanine mark. A coiled-coil region spans residues 40–101 (KRLLEEFVNH…AFQHFQELDE (62 aa)). A phosphothreonine mark is found at threonine 122, threonine 395, and threonine 405. Phosphoserine is present on serine 412.

Belongs to the SEC10 family. The exocyst complex is composed of EXOC1, EXOC2, EXOC3, EXOC4, EXOC5, EXOC6, EXOC7 and EXOC8. Interacts with EXOC3L1. Ubiquitous.

It localises to the cytoplasm. Its subcellular location is the midbody. Component of the exocyst complex involved in the docking of exocytic vesicles with fusion sites on the plasma membrane. This is Exocyst complex component 5 (Exoc5) from Rattus norvegicus (Rat).